The sequence spans 262 residues: F-actin-capping protein subunit alpha (262 aa).

It belongs to the F-actin-capping protein alpha subunit family. In terms of assembly, heterodimer of an alpha and a beta subunit.

F-actin-capping proteins bind in a Ca(2+)-independent manner to the fast growing ends of actin filaments (barbed end) thereby blocking the exchange of subunits at these ends. Unlike other capping proteins (such as gelsolin and severin), these proteins do not sever actin filaments. This is F-actin-capping protein subunit alpha (CAP1) from Kluyveromyces lactis (strain ATCC 8585 / CBS 2359 / DSM 70799 / NBRC 1267 / NRRL Y-1140 / WM37) (Yeast).